We begin with the raw amino-acid sequence, 585 residues long: Voltage-gated potassium channel KCNC1 (585 aa).

The Cytoplasmic segment spans residues 1–190 (MGQGDESERI…EDPYSSRYAR (190 aa)). S44 carries the post-translational modification Phosphoserine. Positions 77, 83, 104, and 105 each coordinate Zn(2+). A disordered region spans residues 121-147 (SFGGAPLDNSADDADADGPGDSGDGED). Residues S130, S142, S158, and S160 each carry the phosphoserine modification. A compositionally biased stretch (acidic residues) spans 130-147 (SADDADADGPGDSGDGED). Residues 191–209 (YVAFASLFFILVSITTFCL) traverse the membrane as a helical segment. N220 and N229 each carry an N-linked (GlcNAc...) asparagine glycan. The chain crosses the membrane as a helical span at residues 248-267 (IEGVCVVWFTFEFLMRVVFC). The Cytoplasmic portion of the chain corresponds to 268 to 276 (PNKVEFIKN). Residues 277–295 (SLNIIDFVAILPFYLEVGL) traverse the membrane as a helical segment. The helical; Voltage-sensor transmembrane segment at 309 to 331 (FLRVVRFVRILRIFKLTRHFVGL) threads the bilayer. Residues 332–344 (RVLGHTLRASTNE) are Cytoplasmic-facing. The helical transmembrane segment at 345-366 (FLLLIIFLALGVLIFATMIYYA) threads the bilayer. Residues T400, L401, G402, and Y403 each coordinate K(+). The Selectivity filter signature appears at 400–405 (TLGYGD). The helical transmembrane segment at 415–436 (LVGALCALAGVLTIAMPVPVIV) threads the bilayer. Residues 437–585 (NNFGMYYSLA…YMPTEAVRVT (149 aa)) are Cytoplasmic-facing. S474 is modified (phosphoserine). Residue T483 is modified to Phosphothreonine.

This sequence belongs to the potassium channel family. C (Shaw) (TC 1.A.1.2) subfamily. Kv3.1/KCNC1 sub-subfamily. As to quaternary structure, homotetramer. Homomultimer. Heteromultimer with KCNG3, KCNG4 and KCNV2. Heteromultimer with KCNC2. Heterotetramer with KCNC3. Interacts with the ancillary subunits KCNE1 and KCNE2; the interaction modulates channel activity. In terms of processing, N-glycosylated; contains sialylated glycans. In terms of tissue distribution, expressed in brain. Expressed in globus pallidal neurons of the basal ganglia (at protein level). Detected on Purkinje cells in the cerebellum molecular layer (at protein level).

It localises to the cell membrane. Its subcellular location is the cell projection. The protein resides in the axon. It is found in the presynaptic cell membrane. The enzyme catalyses K(+)(in) = K(+)(out). Voltage-gated potassium channel that opens in response to the voltage difference across the membrane and through which potassium ions pass in accordance with their electrochemical gradient. The mechanism is time-dependent and inactivation is slow. Plays an important role in the rapid repolarization of fast-firing brain neurons. Can form functional homotetrameric channels and heterotetrameric channels that contain variable proportions of KCNC2, and possibly other family members as well. Contributes to fire sustained trains of very brief action potentials at high frequency in pallidal neurons. This Rattus norvegicus (Rat) protein is Voltage-gated potassium channel KCNC1.